A 91-amino-acid chain; its full sequence is Non-specific lipid-transfer protein P3 (91 aa).

4 cysteine pairs are disulfide-bonded: Cys3/Cys50, Cys13/Cys27, Cys28/Cys73, and Cys48/Cys87.

It localises to the secreted. Plant non-specific lipid-transfer proteins transfer phospholipids as well as galactolipids across membranes. May play a role in wax or cutin deposition in the cell walls of expanding epidermal cells and certain secretory tissues. The polypeptide is Non-specific lipid-transfer protein P3 (Vitis sp. (Grape)).